Consider the following 270-residue polypeptide: tRNA pseudouridine synthase A (270 aa).

D60 (nucleophile) is an active-site residue. An RNA binding region spans residues 107–111 (FHARF). Y118 serves as a coordination point for substrate. Positions 168–172 (QCQSR) are interaction with tRNA.

It belongs to the tRNA pseudouridine synthase TruA family. Homodimer.

The enzyme catalyses uridine(38/39/40) in tRNA = pseudouridine(38/39/40) in tRNA. Formation of pseudouridine at positions 38, 39 and 40 in the anticodon stem and loop of transfer RNAs. The polypeptide is tRNA pseudouridine synthase A (Escherichia fergusonii (strain ATCC 35469 / DSM 13698 / CCUG 18766 / IAM 14443 / JCM 21226 / LMG 7866 / NBRC 102419 / NCTC 12128 / CDC 0568-73)).